The following is a 632-amino-acid chain: Protein NSP-INTERACTING KINASE 3 (632 aa).

Residues 1–25 (MEGVRFVVWRLGFLVFVWFFDISSA) form the signal peptide. Over 26–238 (TLSPTGVNYE…GTRTNGHHVA (213 aa)) the chain is Extracellular. A glycan (N-linked (GlcNAc...) asparagine) is linked at Asn-96. LRR repeat units lie at residues 97-121 (LTYLQSVVLQNNAITGPIPETIGRL), 122-145 (EKLQSLDLSNNSFTGEIPASLGEL), 147-168 (NLNYLRLNNNSLIGTCPESLSK), and 169-193 (IEGLTLVDISYNNLSGSLPKVSART). N-linked (GlcNAc...) asparagine glycans are attached at residues Asn-131, Asn-155, Asn-181, and Asn-210. Residues 239-259 (LAFAASFSAAFFVFFTSGMFL) form a helical membrane-spanning segment. The Cytoplasmic segment spans residues 260–632 (WWRYRRNKQI…VEAIELSGPR (373 aa)). Thr-298 is subject to Phosphothreonine. A Protein kinase domain is found at 301–584 (FNSKNILGRG…EGDGLAERWE (284 aa)). An ATP-binding site is contributed by 307–315 (LGRGGYGIV). Phosphothreonine is present on Thr-324. Position 329 (Lys-329) interacts with ATP. Ser-382 and Ser-385 each carry phosphoserine. The interaction with geminivirus NSP protein stretch occupies residues 415–495 (YLHEQCDPKI…DVFGFGILLL (81 aa)). The active-site Proton acceptor is the Asp-428. Residues Thr-461, Thr-462, and Thr-467 each carry the phosphothreonine modification. Position 475 is a phosphotyrosine (Tyr-475). Residue Ser-477 is modified to Phosphoserine. Position 478 is a phosphothreonine (Thr-478). Ser-482 is modified (phosphoserine). Thr-557 carries the post-translational modification Phosphothreonine.

It belongs to the protein kinase superfamily. Ser/Thr protein kinase family. In terms of assembly, oligomer. Interacts with geminivirus nuclear shuttle protein (NSP). Post-translationally, autophosphorylated. In terms of tissue distribution, expressed in seedlings, leaves and flowers.

The protein localises to the cell membrane. It carries out the reaction L-seryl-[protein] + ATP = O-phospho-L-seryl-[protein] + ADP + H(+). The enzyme catalyses L-threonyl-[protein] + ATP = O-phospho-L-threonyl-[protein] + ADP + H(+). Its activity is regulated as follows. Inhibited by the viral nuclear shuttle protein (NSP) that binds to the region required for oligomerization. In terms of biological role, involved in defense response to geminivirus infection. This chain is Protein NSP-INTERACTING KINASE 3 (NIK3), found in Arabidopsis thaliana (Mouse-ear cress).